We begin with the raw amino-acid sequence, 235 residues long: LexA repressor (235 aa).

The H-T-H motif DNA-binding region spans 26–46 (FDEMKDALDLKSKSGIHRLIT). Residues Ser-156 and Lys-194 each act as for autocatalytic cleavage activity in the active site.

It belongs to the peptidase S24 family. In terms of assembly, homodimer.

It carries out the reaction Hydrolysis of Ala-|-Gly bond in repressor LexA.. Its function is as follows. Represses a number of genes involved in the response to DNA damage (SOS response), including recA and lexA. In the presence of single-stranded DNA, RecA interacts with LexA causing an autocatalytic cleavage which disrupts the DNA-binding part of LexA, leading to derepression of the SOS regulon and eventually DNA repair. The polypeptide is LexA repressor (Paramagnetospirillum magneticum (strain ATCC 700264 / AMB-1) (Magnetospirillum magneticum)).